Consider the following 196-residue polypeptide: Imidazoleglycerol-phosphate dehydratase (196 aa).

The protein belongs to the imidazoleglycerol-phosphate dehydratase family.

It localises to the cytoplasm. It carries out the reaction D-erythro-1-(imidazol-4-yl)glycerol 3-phosphate = 3-(imidazol-4-yl)-2-oxopropyl phosphate + H2O. It functions in the pathway amino-acid biosynthesis; L-histidine biosynthesis; L-histidine from 5-phospho-alpha-D-ribose 1-diphosphate: step 6/9. The protein is Imidazoleglycerol-phosphate dehydratase of Clostridium botulinum (strain Kyoto / Type A2).